The sequence spans 207 residues: Outer-membrane lipoprotein carrier protein (207 aa).

Residues 1–21 (MRAIRMLLVSALAMGAVSAHA) form the signal peptide.

It belongs to the LolA family. In terms of assembly, monomer.

The protein localises to the periplasm. In terms of biological role, participates in the translocation of lipoproteins from the inner membrane to the outer membrane. Only forms a complex with a lipoprotein if the residue after the N-terminal Cys is not an aspartate (The Asp acts as a targeting signal to indicate that the lipoprotein should stay in the inner membrane). This chain is Outer-membrane lipoprotein carrier protein, found in Pseudomonas entomophila (strain L48).